The chain runs to 224 residues: MAQGLIEVERKFAPGPDTEERLQELGATLEHRVTFRDTYYDTSELSLMLSDHWLRQREGSGWELKCPGVTGVSGPHNEYVEVTSEAAIVAQLFELLGSGEQKPAGVAAVLGSLKLQEVASFITTRSSWKLALSGAHGQEPQLTIDLDSADFGYAVGEVEAMVHEKAEVPAALEKIITVSSMLGVPAQEEAPAKLMVYLQRFRPLDYQRLLEAASSGEATGDSAS.

Ala-2 is subject to N-acetylalanine. The CYTH domain occupies 5–201 (LIEVERKFAP…AKLMVYLQRF (197 aa)). Mg(2+) contacts are provided by Glu-7 and Glu-9. Lys-11, Arg-55, Arg-57, Lys-65, and Arg-125 together coordinate substrate. Mg(2+) contacts are provided by Asp-145, Glu-157, and Glu-159. Glu-157 is a binding site for substrate. Lys-193 serves as a coordination point for substrate.

This sequence belongs to the ThTPase family. As to quaternary structure, monomer. It depends on Mg(2+) as a cofactor.

It localises to the cytoplasm. It catalyses the reaction thiamine triphosphate + H2O = thiamine diphosphate + phosphate + H(+). Hydrolase highly specific for thiamine triphosphate (ThTP). This chain is Thiamine-triphosphatase (Thtpa), found in Mus musculus (Mouse).